A 122-amino-acid chain; its full sequence is Crustacean hyperglycemic hormones 7 (122 aa).

The N-terminal stretch at 1 to 26 (MSLAMTAFRMMAVALVVVVASSTTWA) is a signal peptide. 3 cysteine pairs are disulfide-bonded: Cys55/Cys91, Cys71/Cys87, and Cys74/Cys100. A Valine amide modification is found at Val120.

This sequence belongs to the arthropod CHH/MIH/GIH/VIH hormone family. As to expression, produced by the medulla terminalis X-organ in the eyestalks and transported to the sinus gland where they are stored and released.

It localises to the secreted. In terms of biological role, hormone found in the sinus gland of isopods and decapods which controls the blood sugar level. Has a secretagogue action over the amylase released from the midgut gland. May act as a stress hormone and may be involved in the control of molting and reproduction. In Penaeus japonicus (Kuruma prawn), this protein is Crustacean hyperglycemic hormones 7.